The chain runs to 227 residues: uncharacterized protein (227 aa).

The RCK N-terminal domain maps to 3 to 119; it reads RADFCIIGLG…STMGIREALI (117 aa). In terms of domain architecture, RCK C-terminal spans 134–221; the sequence is HGLENEIINL…LNKYLNYINP (88 aa).

This is an uncharacterized protein from Mycoplasma genitalium (strain ATCC 33530 / DSM 19775 / NCTC 10195 / G37) (Mycoplasmoides genitalium).